The following is a 430-amino-acid chain: Glutamate-1-semialdehyde 2,1-aminomutase (430 aa).

Lys265 is modified (N6-(pyridoxal phosphate)lysine).

It belongs to the class-III pyridoxal-phosphate-dependent aminotransferase family. HemL subfamily. It depends on pyridoxal 5'-phosphate as a cofactor.

Its subcellular location is the cytoplasm. The catalysed reaction is (S)-4-amino-5-oxopentanoate = 5-aminolevulinate. It participates in porphyrin-containing compound metabolism; protoporphyrin-IX biosynthesis; 5-aminolevulinate from L-glutamyl-tRNA(Glu): step 2/2. This Caldivirga maquilingensis (strain ATCC 700844 / DSM 13496 / JCM 10307 / IC-167) protein is Glutamate-1-semialdehyde 2,1-aminomutase.